The following is a 1332-amino-acid chain: MLDVNLFDELRIGLATADDIRRWSHGEVKKPETINYRTLKPEKDGLFCERIFGPTRDWECACGKYKRVRYKGIVCERCGVEVTKSKVRRERMGHIELAAPVTHIWYFKGVPSRLGYLLDLAPKDLEKIIYFAANIITSVDEEARHTDQETLEADIFMEKKEVEADRDEELAERQQKLEEDLKELESNGAKADAKRKVQNAAEREMRHIRERAEREIDRLDEIWNTFIKLAPKQMIVDETIYSELVDRYEDYFTGGMGAEAIQTLIKNFDLEAEAEKLSEVIRDGKGQKQVRALKRLRVVAAFLRSGNDPAAMVLDAIPVIPPELRPMVQLDGGRFATSDLNDLYRRVINRNNRLKRMIDLGAPEIIVNNEKRMLQESVDALFDNGRRGRPVTGPGNRPLKSLSDLLKGKQGRFRQNLLGKRVDYSGRSVIIVGPQLKLHQCGLPKLMALELFKPFVMKRLVEKSYAQNIRSAKRMVERQRPEVWDVLEEAIAEHPVMLNRAPTLHRLGIQAFEPVLVEGKAIQLHPLACEAFNADFDGDQMAVHLPLSAEAQAEARVLMLASNNILSPASGKPLAMPRLDMVTGLYFLTLEKSEDQLGGEGAYHEADENGPKRGTYSSFAEALMARDRGVLGLQAPIEVRISHLRPPEDIEAELFPDGWQRGQKWTAHTTLGRIMFNELLPWNYPFVNGVMAKKAQAVIINDLAARYPMITVAQTVDKMKDAGFYWATRSCVTISMDDVLVLPNKEEILQRYEKQAATIEKKLARGKINNEERYRSLVDLWKECTDFVGESVEKIYPDDNPIPMIVKSGAAGNMRQIWTLAGMKGMVTNSRGDYITRPIKTSFREGLSVLEYFNNSHGSRKGLADTALRTADSGYLTRRLVDVAQDVIVREDDCGTRKGLEVDVAKPVLDAEGNETGEFTRAEFLETALIGRYLAKDAVNDNGDVIYERGAFVGDAEAKKMVAEGVRTATVRTVMMCETATGVCATCYGRSMATGQKVDIGEAVGIVAAQSIGEPGTQLTMRTFHQGGVGGDITGGLPRVQELFEARVPKNQAPIASTEGTIKLEDDGNFYTLTITPDNGEDEVVYEKLSKRQGLAVTQEPGGFEHQLRTGDHVVTGQPLLRGAPDPHEVLRVEGVTGVQKHLIEQVQKVYRDQGVAIHDKHIEIIVRQMLRRLTVVDSGSTELLPGSLIDRNEARAINKAVATNGGEGAAFRQEIMGITKASLATESWLSAASFQETTRVLTDAAINKRSDKLIGLKENVIIGKLIPAGTGISRYRNISVEPTEEARAQAFSMNTSYGDGFYGEDGAYGEFTGAAVRLDDQGFDGGFGDIS.

Positions 60, 62, 75, and 78 each coordinate Zn(2+). The Mg(2+) site is built by Asp535, Asp537, and Asp539. Zn(2+) is bound by residues Cys894, Cys977, Cys984, and Cys987.

It belongs to the RNA polymerase beta' chain family. In terms of assembly, the RNAP catalytic core consists of 2 alpha, 1 beta, 1 beta' and 1 omega subunit. When a sigma factor is associated with the core the holoenzyme is formed, which can initiate transcription. Mg(2+) serves as cofactor. It depends on Zn(2+) as a cofactor.

The catalysed reaction is RNA(n) + a ribonucleoside 5'-triphosphate = RNA(n+1) + diphosphate. Functionally, DNA-dependent RNA polymerase catalyzes the transcription of DNA into RNA using the four ribonucleoside triphosphates as substrates. This chain is DNA-directed RNA polymerase subunit beta', found in Corynebacterium kroppenstedtii (strain DSM 44385 / JCM 11950 / CIP 105744 / CCUG 35717).